We begin with the raw amino-acid sequence, 227 residues long: Adapter protein MecA 1 (227 aa).

It belongs to the MecA family. As to quaternary structure, homodimer.

Its function is as follows. Enables the recognition and targeting of unfolded and aggregated proteins to the ClpC protease or to other proteins involved in proteolysis. Acts negatively in the development of competence by binding ComK and recruiting it to the ClpCP protease. When overexpressed, inhibits sporulation. Also involved in Spx degradation by ClpC. This is Adapter protein MecA 1 (mecA1) from Bacillus anthracis.